The primary structure comprises 169 residues: Protein ORFb in retron Ec67 (169 aa).

This is Protein ORFb in retron Ec67 from Escherichia coli.